Consider the following 201-residue polypeptide: Anthranilate synthase component 2 (201 aa).

Residues 1-199 (MLLMIDNYDS…LRQQGGVRGE (199 aa)) enclose the Glutamine amidotransferase type-1 domain. 52–54 (GPC) is a binding site for L-glutamine. C79 serves as the catalytic Nucleophile; for GATase activity. Residues Q83 and 129–130 (SL) contribute to the L-glutamine site. Active-site for GATase activity residues include H173 and E175.

In terms of assembly, heterotetramer consisting of two non-identical subunits: a beta subunit (TrpG) and a large alpha subunit (TrpE).

It carries out the reaction chorismate + L-glutamine = anthranilate + pyruvate + L-glutamate + H(+). The protein operates within amino-acid biosynthesis; L-tryptophan biosynthesis; L-tryptophan from chorismate: step 1/5. Its function is as follows. Part of a heterotetrameric complex that catalyzes the two-step biosynthesis of anthranilate, an intermediate in the biosynthesis of L-tryptophan. In the first step, the glutamine-binding beta subunit (TrpG) of anthranilate synthase (AS) provides the glutamine amidotransferase activity which generates ammonia as a substrate that, along with chorismate, is used in the second step, catalyzed by the large alpha subunit of AS (TrpE) to produce anthranilate. In the absence of TrpG, TrpE can synthesize anthranilate directly from chorismate and high concentrations of ammonia. In Pseudomonas aeruginosa (strain ATCC 15692 / DSM 22644 / CIP 104116 / JCM 14847 / LMG 12228 / 1C / PRS 101 / PAO1), this protein is Anthranilate synthase component 2.